The sequence spans 415 residues: ATP-dependent Clp protease ATP-binding subunit ClpX (415 aa).

Positions 1–54 (MARNRMGGALICSFCNKPESSERFVVPGPGGIAICDRCVDLCESYIKSYKTVRP) constitute a ClpX-type ZB domain. Residues Cys-12, Cys-15, Cys-35, and Cys-38 each coordinate Zn(2+). 117 to 124 (PTGSGKTL) is a binding site for ATP.

It belongs to the ClpX chaperone family. As to quaternary structure, component of the ClpX-ClpP complex. Forms a hexameric ring that, in the presence of ATP, binds to fourteen ClpP subunits assembled into a disk-like structure with a central cavity, resembling the structure of eukaryotic proteasomes.

ATP-dependent specificity component of the Clp protease. It directs the protease to specific substrates. Can perform chaperone functions in the absence of ClpP. The polypeptide is ATP-dependent Clp protease ATP-binding subunit ClpX (Treponema denticola (strain ATCC 35405 / DSM 14222 / CIP 103919 / JCM 8153 / KCTC 15104)).